Consider the following 691-residue polypeptide: Elongation factor G (691 aa).

The tr-type G domain occupies 8–282; the sequence is ERVRNIGIAA…AVVNYLPAPV (275 aa). Residues 17 to 24, 81 to 85, and 135 to 138 contribute to the GTP site; these read AHIDAGKT, DTPGH, and NKMD.

It belongs to the TRAFAC class translation factor GTPase superfamily. Classic translation factor GTPase family. EF-G/EF-2 subfamily.

Its subcellular location is the cytoplasm. Its function is as follows. Catalyzes the GTP-dependent ribosomal translocation step during translation elongation. During this step, the ribosome changes from the pre-translocational (PRE) to the post-translocational (POST) state as the newly formed A-site-bound peptidyl-tRNA and P-site-bound deacylated tRNA move to the P and E sites, respectively. Catalyzes the coordinated movement of the two tRNA molecules, the mRNA and conformational changes in the ribosome. The chain is Elongation factor G from Prochlorococcus marinus (strain NATL2A).